A 607-amino-acid chain; its full sequence is Autophagy-related protein 16-1 (607 aa).

The tract at residues 13 to 43 (WKRHIAEELRRRDRLQRQAFEEIILQYTKLL) is interaction with ATG5. Residues 79–230 (DSQLQEMAQL…QKELAEAAKE (152 aa)) adopt a coiled-coil conformation. Residue serine 139 is modified to Phosphoserine. The tract at residues 207 to 230 (AENEKDSRRRQARLQKELAEAAKE) is WIPI2-binding. Residues 230-242 (EPLPVEQDDDIEV) form an RB1CC1-binding region. Residues serine 269 and serine 287 each carry the phosphoserine modification. A Caspase cleavage motif is present at residues 296-299 (DIMD). WD repeat units lie at residues 320-359 (AHDG…CEFK), 364-403 (GSNA…LRHT), 406-445 (GHSG…CIKT), 447-484 (FAGS…VVRE), 486-525 (ELLG…VKQT), 532-573 (KCGS…KVLS), and 575-607 (QHSS…WAQP).

It belongs to the WD repeat ATG16 family. As to quaternary structure, homodimer. Homooligomer. Heterooligomer with ATG16L2. Interacts with WIPI1. Interacts with WIPI2. Interacts with RB1CC1; the interaction is required for ULK1 complex-dependent autophagy. Interacts with ATG5. Part of the minor complex composed of 4 sets of ATG12-ATG5 and ATG16L1 (400 kDa); this complex interacts with ATG3 leading to disruption of ATG7 interaction and promotion of ATG8-like proteins lipidation. Part of the major complex composed of 8 sets of ATG12-ATG5 and ATG16L1 (800 kDa). Interacts with RAB33B (GTP- and GDP-bound forms); the complex consists of a tetramer where two RAB33B molecules bind independently one molecule of the ATG16L1 homodimer; the interaction promotes ATG12-ATG5-ATG16L1 complex recruitment to phagophores. Interacts (via WD repeats) with TMEM59; the interaction mediates unconventional autophagic activity of TMEM59. Interacts with TLR2. Interacts (via WD repeats) with MEFV. Interacts (via N-terminal) with CLTC. Interacts with NOD1. Interacts with NOD2. Interacts with TUFM. Interacts with TRIM16. Interacts (via WD repeats) with SPATA33. Interacts with Irgm1. Proteolytic cleavage by activated CASP3 leads to degradation and may regulate autophagy upon cellular stress and apoptotic stimuli. In terms of processing, phosphorylation at Ser-139 promotes association with the ATG12-ATG5 conjugate to form the ATG12-ATG5-ATG16L1 complex. Widely expressed. Expressed in the testis and sperm midpiece (at protein level). In terms of tissue distribution, expressed in liver. As to expression, highly expressed in liver. Expressed in brain.

It localises to the cytoplasm. It is found in the preautophagosomal structure membrane. The protein resides in the endosome membrane. Its subcellular location is the lysosome membrane. Functionally, plays an essential role in both canonical and non-canonical autophagy: interacts with ATG12-ATG5 to mediate the lipidation to ATG8 family proteins (MAP1LC3A, MAP1LC3B, MAP1LC3C, GABARAPL1, GABARAPL2 and GABARAP). Acts as a molecular hub, coordinating autophagy pathways via distinct domains that support either canonical or non-canonical signaling. During canonical autophagy, interacts with ATG12-ATG5 to mediate the conjugation of phosphatidylethanolamine (PE) to ATG8 proteins, to produce a membrane-bound activated form of ATG8. Thereby, controls the elongation of the nascent autophagosomal membrane. As part of the ATG8 conjugation system with ATG5 and ATG12, required for recruitment of LRRK2 to stressed lysosomes and induction of LRRK2 kinase activity in response to lysosomal stress. Also involved in non-canonical autophagy, a parallel pathway involving conjugation of ATG8 proteins to single membranes at endolysosomal compartments, probably by catalyzing conjugation of phosphatidylserine (PS) to ATG8. Non-canonical autophagy plays a key role in epithelial cells to limit lethal infection by influenza A (IAV) virus. Regulates mitochondrial antiviral signaling (MAVS)-dependent type I interferon (IFN-I) production. Negatively regulates NOD1- and NOD2-driven inflammatory cytokine response. Instead, promotes an autophagy-dependent antibacterial pathway together with NOD1 or NOD2. Plays a role in regulating morphology and function of Paneth cell. In Mus musculus (Mouse), this protein is Autophagy-related protein 16-1.